Reading from the N-terminus, the 386-residue chain is Protein RETICULATA-RELATED 4, chloroplastic (386 aa).

Residues 1–61 (MAIASCFFCV…RRVPITPVLS (61 aa)) constitute a chloroplast transit peptide. The interval 61 to 99 (SASSGNGGSDNNGGGLSGGGGGGDGGKNDGDGHGDEDRD) is disordered. The segment covering 65–85 (GNGGSDNNGGGLSGGGGGGDG) has biased composition (gly residues). A compositionally biased stretch (basic and acidic residues) spans 86–99 (GKNDGDGHGDEDRD). 2 helical membrane-spanning segments follow: residues 201 to 221 (VVFADVAMAIIADFMLVYLPA) and 273 to 293 (KLFAVGTTSSLVGTAITNAFI).

Belongs to the RETICULATA family.

It is found in the plastid. The protein resides in the chloroplast membrane. May play a role in leaf development. This is Protein RETICULATA-RELATED 4, chloroplastic from Arabidopsis thaliana (Mouse-ear cress).